The following is a 199-amino-acid chain: Venom allergen 5 (199 aa).

2 disulfide bridges follow: Cys-21-Cys-87 and Cys-167-Cys-184. Positions 38–186 constitute an SCP domain; that stretch reads LKVHNDERQK…FYKCYLACNY (149 aa). The disordered stretch occupies residues 47–67; the sequence is KVKAGQETRGNPGPQPAASNM.

Belongs to the CRISP family. Venom allergen 5-like subfamily. In terms of tissue distribution, expressed by the venom gland.

The protein localises to the secreted. This chain is Venom allergen 5, found in Brachyponera chinensis (Asian needle ant).